The following is a 170-amino-acid chain: Adenine phosphoribosyltransferase (170 aa).

It belongs to the purine/pyrimidine phosphoribosyltransferase family. In terms of assembly, homodimer.

The protein localises to the cytoplasm. It carries out the reaction AMP + diphosphate = 5-phospho-alpha-D-ribose 1-diphosphate + adenine. Its pathway is purine metabolism; AMP biosynthesis via salvage pathway; AMP from adenine: step 1/1. In terms of biological role, catalyzes a salvage reaction resulting in the formation of AMP, that is energically less costly than de novo synthesis. The protein is Adenine phosphoribosyltransferase of Carboxydothermus hydrogenoformans (strain ATCC BAA-161 / DSM 6008 / Z-2901).